The sequence spans 228 residues: 7-cyano-7-deazaguanine synthase (228 aa).

Leucine 9–leucine 19 contributes to the ATP binding site. Residues cysteine 193, cysteine 203, cysteine 206, and cysteine 209 each coordinate Zn(2+).

Belongs to the QueC family. It depends on Zn(2+) as a cofactor.

It carries out the reaction 7-carboxy-7-deazaguanine + NH4(+) + ATP = 7-cyano-7-deazaguanine + ADP + phosphate + H2O + H(+). The protein operates within purine metabolism; 7-cyano-7-deazaguanine biosynthesis. In terms of biological role, catalyzes the ATP-dependent conversion of 7-carboxy-7-deazaguanine (CDG) to 7-cyano-7-deazaguanine (preQ(0)). The sequence is that of 7-cyano-7-deazaguanine synthase from Rickettsia massiliae (strain Mtu5).